Consider the following 187-residue polypeptide: Elongation factor P (187 aa).

It belongs to the elongation factor P family.

The protein localises to the cytoplasm. Its pathway is protein biosynthesis; polypeptide chain elongation. In terms of biological role, involved in peptide bond synthesis. Stimulates efficient translation and peptide-bond synthesis on native or reconstituted 70S ribosomes in vitro. Probably functions indirectly by altering the affinity of the ribosome for aminoacyl-tRNA, thus increasing their reactivity as acceptors for peptidyl transferase. In Corynebacterium aurimucosum (strain ATCC 700975 / DSM 44827 / CIP 107346 / CN-1) (Corynebacterium nigricans), this protein is Elongation factor P.